We begin with the raw amino-acid sequence, 431 residues long: uncharacterized protein (431 aa).

One can recognise a Peptidase S8 domain in the interval methionine 1 to glycine 258.

Belongs to the peptidase S8 family.

This is an uncharacterized protein from Sinorhizobium fredii (strain NBRC 101917 / NGR234).